We begin with the raw amino-acid sequence, 725 residues long: Aminopeptidase RNPEPL1 (725 aa).

Residue 326-330 participates in substrate binding; it reads VAMEN. Histidine 353 is a Zn(2+) binding site. The active-site Proton acceptor is the glutamate 354. Zn(2+)-binding residues include histidine 357 and glutamate 376. Residues 676 to 699 are disordered; that stretch reads GLGSSTEPASEPSTELGKAEADTD. A compositionally biased stretch (low complexity) spans 679 to 690; that stretch reads SSTEPASEPSTE.

It belongs to the peptidase M1 family. Zn(2+) serves as cofactor. As to expression, ubiquitously expressed. Expressed at relatively higher levels in heart and skeletal muscle.

The enzyme catalyses Release of N-terminal amino acids, preferentially methionine, from peptides and arylamides.. Inhibited by calcium but not affected by chloride ions. Inhibited by amastatin and to a lower extent by bestatin. Weakly inhibited by puromycin. In terms of biological role, broad specificity aminopeptidase which preferentially hydrolyzes an N-terminal methionine, citrulline or glutamine. The chain is Aminopeptidase RNPEPL1 from Homo sapiens (Human).